Reading from the N-terminus, the 154-residue chain is Ferredoxin C 1, chloroplastic (154 aa).

Residues 1-56 constitute a chloroplast transit peptide; it reads MATLPLPTQTSTISLPKPYLSNSFSFPLRNATLSTTTNRRNFLTTGRIIARAYKVV. In terms of domain architecture, 2Fe-2S ferredoxin-type spans 57–142; that stretch reads VEHDGKTTEL…DCHIKMIPEE (86 aa). The [2Fe-2S] cluster site is built by Cys-89, Cys-94, Cys-97, and Cys-126.

This sequence belongs to the 2Fe2S plant-type ferredoxin family. Requires [2Fe-2S] cluster as cofactor.

It is found in the plastid. Its subcellular location is the chloroplast. Functionally, ferredoxins are iron-sulfur proteins that transfer electrons in a wide variety of metabolic reactions. Mediates alternative electron partitioning in conditions of acceptor limitation at photosystem I. Accepts electrons from photosystem I (PSI) and is capable of electron transfer with FNR, but cannot support photoreduction of NADP(+). The sequence is that of Ferredoxin C 1, chloroplastic from Arabidopsis thaliana (Mouse-ear cress).